A 229-amino-acid chain; its full sequence is MIRAIVTDIEGTTSDIRFVHNVLFPYARERLAGFVTAQQFVEPVKTILDNLREEIAQPAAGAEELIATLFAFMDEDRKSTALKALQGIIWRDGYVHGDFTGHLYPDVLPALEKWKSQGIDLYVYSSGSVAAQKLLFGYSDEGDITHLFNGYFDTLVGAKREAQSYRNIAEQLGQPPAAILFLSDIHQELDAAEEAGFRTLQLVRGDRDPASHHPQVQRFDDIHPEQIPA.

Positions 206 to 229 (DRDPASHHPQVQRFDDIHPEQIPA) are disordered. Over residues 218–229 (RFDDIHPEQIPA) the composition is skewed to basic and acidic residues.

It belongs to the HAD-like hydrolase superfamily. MasA/MtnC family. Monomer. It depends on Mg(2+) as a cofactor.

The catalysed reaction is 5-methylsulfanyl-2,3-dioxopentyl phosphate + H2O = 1,2-dihydroxy-5-(methylsulfanyl)pent-1-en-3-one + phosphate. The protein operates within amino-acid biosynthesis; L-methionine biosynthesis via salvage pathway; L-methionine from S-methyl-5-thio-alpha-D-ribose 1-phosphate: step 3/6. It participates in amino-acid biosynthesis; L-methionine biosynthesis via salvage pathway; L-methionine from S-methyl-5-thio-alpha-D-ribose 1-phosphate: step 4/6. Its function is as follows. Bifunctional enzyme that catalyzes the enolization of 2,3-diketo-5-methylthiopentyl-1-phosphate (DK-MTP-1-P) into the intermediate 2-hydroxy-3-keto-5-methylthiopentenyl-1-phosphate (HK-MTPenyl-1-P), which is then dephosphorylated to form the acireductone 1,2-dihydroxy-3-keto-5-methylthiopentene (DHK-MTPene). This Klebsiella oxytoca protein is Enolase-phosphatase E1.